Consider the following 155-residue polypeptide: Ribosome-binding factor A (155 aa).

It belongs to the RbfA family. In terms of assembly, monomer. Binds 30S ribosomal subunits, but not 50S ribosomal subunits or 70S ribosomes.

The protein localises to the cytoplasm. In terms of biological role, one of several proteins that assist in the late maturation steps of the functional core of the 30S ribosomal subunit. Associates with free 30S ribosomal subunits (but not with 30S subunits that are part of 70S ribosomes or polysomes). Required for efficient processing of 16S rRNA. May interact with the 5'-terminal helix region of 16S rRNA. This is Ribosome-binding factor A from Methylocella silvestris (strain DSM 15510 / CIP 108128 / LMG 27833 / NCIMB 13906 / BL2).